A 193-amino-acid chain; its full sequence is Calcium-binding protein E63-1 (193 aa).

EF-hand domains are found at residues valine 35–asparagine 70, valine 71–leucine 106, aspartate 127–proline 162, and leucine 163–leucine 193. The Ca(2+) site is built by aspartate 48, asparagine 50, aspartate 52, arginine 54, and glutamate 59. Aspartate 140, aspartate 142, asparagine 144, glutamate 151, aspartate 176, aspartate 178, aspartate 180, arginine 182, and glutamate 187 together coordinate Ca(2+).

The polypeptide is Calcium-binding protein E63-1 (Eip63F-1) (Drosophila melanogaster (Fruit fly)).